A 333-amino-acid chain; its full sequence is Ornithine carbamoyltransferase (333 aa).

Residues 56–59 (STRT), Arg-107, and 134–137 (HPTQ) contribute to the carbamoyl phosphate site. Residues Asn-167, Asp-231, and 235-236 (SM) each bind L-ornithine. Carbamoyl phosphate is bound by residues 273-274 (CL) and Arg-318.

Belongs to the aspartate/ornithine carbamoyltransferase superfamily. OTCase family.

Its subcellular location is the cytoplasm. It carries out the reaction carbamoyl phosphate + L-ornithine = L-citrulline + phosphate + H(+). The protein operates within amino-acid degradation; L-arginine degradation via ADI pathway; carbamoyl phosphate from L-arginine: step 2/2. Its function is as follows. Reversibly catalyzes the transfer of the carbamoyl group from carbamoyl phosphate (CP) to the N(epsilon) atom of ornithine (ORN) to produce L-citrulline. This is Ornithine carbamoyltransferase from Clostridium botulinum (strain Langeland / NCTC 10281 / Type F).